We begin with the raw amino-acid sequence, 368 residues long: Alanine racemase (368 aa).

Lys40 (proton acceptor; specific for D-alanine) is an active-site residue. Lys40 carries the N6-(pyridoxal phosphate)lysine modification. A substrate-binding site is contributed by Arg134. Tyr263 serves as the catalytic Proton acceptor; specific for L-alanine. Met310 serves as a coordination point for substrate.

Belongs to the alanine racemase family. Requires pyridoxal 5'-phosphate as cofactor.

It catalyses the reaction L-alanine = D-alanine. It participates in amino-acid biosynthesis; D-alanine biosynthesis; D-alanine from L-alanine: step 1/1. In terms of biological role, catalyzes the interconversion of L-alanine and D-alanine. May also act on other amino acids. The polypeptide is Alanine racemase (alr) (Listeria monocytogenes serotype 4a (strain HCC23)).